Here is a 301-residue protein sequence, read N- to C-terminus: Phosphoglycolate phosphatase 2 (301 aa).

The Nucleophile role is filled by Asp-19.

The protein belongs to the HAD-like hydrolase superfamily. CbbY/CbbZ/Gph/YieH family.

It catalyses the reaction 2-phosphoglycolate + H2O = glycolate + phosphate. Functionally, dephosphorylates 2-phosphoglycolate, but does not contribute to photorespiratory metabolism. The sequence is that of Phosphoglycolate phosphatase 2 (PGLP2) from Arabidopsis thaliana (Mouse-ear cress).